The following is a 466-amino-acid chain: Soluble pyridine nucleotide transhydrogenase (466 aa).

36 to 45 serves as a coordination point for FAD; the sequence is ERYHNIGGGC.

The protein belongs to the class-I pyridine nucleotide-disulfide oxidoreductase family. It depends on FAD as a cofactor.

It localises to the cytoplasm. It carries out the reaction NAD(+) + NADPH = NADH + NADP(+). In terms of biological role, conversion of NADPH, generated by peripheral catabolic pathways, to NADH, which can enter the respiratory chain for energy generation. This chain is Soluble pyridine nucleotide transhydrogenase, found in Erwinia tasmaniensis (strain DSM 17950 / CFBP 7177 / CIP 109463 / NCPPB 4357 / Et1/99).